The chain runs to 350 residues: DNA polymerase IV (350 aa).

The 182-residue stretch at 6-187 folds into the UmuC domain; it reads IIHIDMDAFY…LPVEKIFGIG (182 aa). Mg(2+) contacts are provided by Asp10 and Asp105. Glu106 is a catalytic residue.

It belongs to the DNA polymerase type-Y family. Monomer. It depends on Mg(2+) as a cofactor.

Its subcellular location is the cytoplasm. It carries out the reaction DNA(n) + a 2'-deoxyribonucleoside 5'-triphosphate = DNA(n+1) + diphosphate. In terms of biological role, poorly processive, error-prone DNA polymerase involved in untargeted mutagenesis. Copies undamaged DNA at stalled replication forks, which arise in vivo from mismatched or misaligned primer ends. These misaligned primers can be extended by PolIV. Exhibits no 3'-5' exonuclease (proofreading) activity. May be involved in translesional synthesis, in conjunction with the beta clamp from PolIII. This Protochlamydia amoebophila (strain UWE25) protein is DNA polymerase IV.